A 53-amino-acid chain; its full sequence is Serine rich endogenous peptide 3 (53 aa).

A signal peptide spans 1–26 (MTKKGPLNLRLLLLLLVVLLPSCSNC). Positions 37 to 53 (SSEWRRKMITVWSKSSY) match the SCOOP motif motif. A SxS motif essential for MIK2 binding motif is present at residues 49 to 51 (SKS).

It belongs to the serine rich endogenous peptide (SCOOP) phytocytokine family. As to quaternary structure, interacts with MIK2 (via extracellular leucine-rich repeat domain); this interaction triggers the formation of complex between MIK2 and the BAK1/SERK3 and SERK4 coreceptors, and subsequent BAK1 activation by phosphorylation.

The protein localises to the cell membrane. The protein resides in the secreted. Its subcellular location is the extracellular space. It is found in the apoplast. Brassicaceae-specific phytocytokine (plant endogenous peptide released into the apoplast) perceived by MIK2 in a BAK1/SERK3 and SERK4 coreceptors-dependent manner, that modulates various physiological and antimicrobial processes including growth prevention and reactive oxygen species (ROS) response regulation. This Arabidopsis thaliana (Mouse-ear cress) protein is Serine rich endogenous peptide 3.